The primary structure comprises 509 residues: ATP synthase subunit alpha (509 aa).

169-176 (GDRQTGKT) is a binding site for ATP.

This sequence belongs to the ATPase alpha/beta chains family. In terms of assembly, F-type ATPases have 2 components, CF(1) - the catalytic core - and CF(0) - the membrane proton channel. CF(1) has five subunits: alpha(3), beta(3), gamma(1), delta(1), epsilon(1). CF(0) has three main subunits: a(1), b(2) and c(9-12). The alpha and beta chains form an alternating ring which encloses part of the gamma chain. CF(1) is attached to CF(0) by a central stalk formed by the gamma and epsilon chains, while a peripheral stalk is formed by the delta and b chains.

The protein localises to the cell inner membrane. The enzyme catalyses ATP + H2O + 4 H(+)(in) = ADP + phosphate + 5 H(+)(out). Produces ATP from ADP in the presence of a proton gradient across the membrane. The alpha chain is a regulatory subunit. This Bradyrhizobium diazoefficiens (strain JCM 10833 / BCRC 13528 / IAM 13628 / NBRC 14792 / USDA 110) protein is ATP synthase subunit alpha.